A 188-amino-acid polypeptide reads, in one-letter code: Putative manganese efflux pump MntP (188 aa).

6 helical membrane-spanning segments follow: residues 3–23 (MITL…VALG), 39–59 (LGWH…LAGL), 65–85 (IETY…GKMI), 104–124 (GMSL…VGLS), 125–145 (LAIV…IAGV), and 167–187 (IAGG…HTLG).

It belongs to the MntP (TC 9.B.29) family.

It localises to the cell inner membrane. Functionally, probably functions as a manganese efflux pump. The protein is Putative manganese efflux pump MntP of Syntrophotalea carbinolica (strain DSM 2380 / NBRC 103641 / GraBd1) (Pelobacter carbinolicus).